Consider the following 240-residue polypeptide: MAPK-interacting and spindle-stabilizing protein-like (240 aa).

The segment at 1 to 240 (MSDEFSLADA…PMPGGPHSYH (240 aa)) is disordered. S2 is subject to N-acetylserine. 3 positions are modified to phosphoserine: S2, S6, and S15. The span at 16–26 (PAKTSAVSNTK) shows a compositional bias: polar residues. The span at 34-43 (WPGSNPWNNP) shows a compositional bias: low complexity. Pro residues-rich tracts occupy residues 44 to 66 (SAPP…PFGP), 74 to 122 (SVPP…PELP), 159 to 185 (PNMP…PPVP), and 193 to 202 (AWGPPAPYPA).

Belongs to the MISS family.

This chain is MAPK-interacting and spindle-stabilizing protein-like (MAPK1IP1L), found in Bos taurus (Bovine).